A 239-amino-acid chain; its full sequence is Small ribosomal subunit protein eS4 (239 aa).

One can recognise an S4 RNA-binding domain in the interval 37–99; sequence IPLAVVIRDY…ADLYFRVIPD (63 aa).

Belongs to the eukaryotic ribosomal protein eS4 family.

The chain is Small ribosomal subunit protein eS4 from Saccharolobus islandicus (strain Y.N.15.51 / Yellowstone #2) (Sulfolobus islandicus).